A 648-amino-acid chain; its full sequence is 60 kDa heat shock protein homolog 1, mitochondrial (648 aa).

The N-terminal 55 residues, 1 to 55 (MFRSCVPKAITSSRCFARMYSKDVRFGSGVRAMMIRGVDILADAVAVTMGPKGRS), are a transit peptide targeting the mitochondrion.

It belongs to the chaperonin (HSP60) family.

The protein resides in the mitochondrion matrix. Functionally, prevents misfolding and promotes the refolding and proper assembly of unfolded polypeptides generated under stress conditions. The protein is 60 kDa heat shock protein homolog 1, mitochondrial (Hsp60B) of Drosophila melanogaster (Fruit fly).